The primary structure comprises 548 residues: Membrane protein insertase YidC (548 aa).

Residues Asn-6–Asp-26 traverse the membrane as a helical segment. The interval Asn-28–Gly-56 is disordered. Over residues Pro-29–Thr-42 the composition is skewed to low complexity. Helical transmembrane passes span Phe-350–Tyr-370, Phe-424–Ile-444, Leu-458–Ile-478, and Pro-499–Val-519.

Belongs to the OXA1/ALB3/YidC family. Type 1 subfamily. Interacts with the Sec translocase complex via SecD. Specifically interacts with transmembrane segments of nascent integral membrane proteins during membrane integration.

Its subcellular location is the cell inner membrane. Required for the insertion and/or proper folding and/or complex formation of integral membrane proteins into the membrane. Involved in integration of membrane proteins that insert both dependently and independently of the Sec translocase complex, as well as at least some lipoproteins. Aids folding of multispanning membrane proteins. This Salmonella typhimurium (strain LT2 / SGSC1412 / ATCC 700720) protein is Membrane protein insertase YidC.